Here is a 420-residue protein sequence, read N- to C-terminus: Serine hydroxymethyltransferase (420 aa).

(6S)-5,6,7,8-tetrahydrofolate is bound by residues L121 and 125–127 (GHL). At K229 the chain carries N6-(pyridoxal phosphate)lysine.

Belongs to the SHMT family. Homodimer. Pyridoxal 5'-phosphate serves as cofactor.

The protein localises to the cytoplasm. The catalysed reaction is (6R)-5,10-methylene-5,6,7,8-tetrahydrofolate + glycine + H2O = (6S)-5,6,7,8-tetrahydrofolate + L-serine. It functions in the pathway one-carbon metabolism; tetrahydrofolate interconversion. It participates in amino-acid biosynthesis; glycine biosynthesis; glycine from L-serine: step 1/1. Catalyzes the reversible interconversion of serine and glycine with tetrahydrofolate (THF) serving as the one-carbon carrier. This reaction serves as the major source of one-carbon groups required for the biosynthesis of purines, thymidylate, methionine, and other important biomolecules. Also exhibits THF-independent aldolase activity toward beta-hydroxyamino acids, producing glycine and aldehydes, via a retro-aldol mechanism. The chain is Serine hydroxymethyltransferase from Streptomyces coelicolor (strain ATCC BAA-471 / A3(2) / M145).